Consider the following 794-residue polypeptide: MSTVKPIDANTVHKICSGQVITDVASAVKELVENSLDSGATTIEIRFKNYGINSIEVVDNGSGIDAGDYESIGKKHFTSKITDFEDLEALQTFGFRGEALSSLCAVGQVIISTATQNEAPKGVQLNLDHEGSLKDKLTIPFQRGTSVMVNDLFCTLPVRRKLLEKNYKREFSKAISLLQAYATISTNKRFMVYHQTKNSGKLLQLSTNSNKDMKLNIMNVFGTKVSSSLIPWNDGIIEGYISRPHVGSTRASNERQMLFINRRLVNLPKIARVIQEVFKPYSMAQSPFFAINLRITNGTIDINVSPDKKSVFLSEEDSIIEFIKNSLQNLCESCGHAISCSRSQSIFSYSSQIPDSSGDSTDQELPQSIPATESETSDDSSFSYKRSPCKRKLVEATAQPAISTSVAEGASLAQVSKPLPERLQKDSMRRSSPLNEKVTASSERMKKKLALFASSTDTSMQKTIDSSFPLKQPINKPSSNPNNLLLNDPSPASTPVAKTINLNEIESVHNAESVSTLSSIPRTEQTSVANRIPSKTAALQKLKFFQSRPLDGLNKFSKKINISLSGVQKDIVRSDALLKFSNKIGVVHDISDENQEDHLNLTVHKADFLRMRVVGQFNRGFIVVVHGNNLFIIDQHASDEKFNYEHLKSNLVINSQDLVLPKRLDLAATEETVLIDHIDLIRRKGFGVAIDLNQRVGNRCTLLSVPTSKNVIFDTSDLLEIISVLSEHPQIDPFSSRLERMLASKACRSSVMIGRALTISEMNTIVRHLAELSKPWNCPHGRPTMRHLLRLKDI.

Disordered regions lie at residues 351–384 and 409–442; these read SQIP…SFSY and GASL…TASS. The span at 352 to 371 shows a compositional bias: polar residues; it reads QIPDSSGDSTDQELPQSIPA. The span at 419–429 shows a compositional bias: basic and acidic residues; sequence LPERLQKDSMR. Polar residues predominate over residues 430 to 442; sequence RSSPLNEKVTASS.

It belongs to the DNA mismatch repair MutL/HexB family.

Functionally, this protein is involved in the repair of mismatches in DNA. This chain is DNA mismatch repair protein pms1 (pms1), found in Schizosaccharomyces pombe (strain 972 / ATCC 24843) (Fission yeast).